Here is a 410-residue protein sequence, read N- to C-terminus: Chorismate synthase (410 aa).

Positions 43 and 49 each coordinate NADP(+). FMN contacts are provided by residues 143–145 (RSS), 264–265 (QA), Gly-308, 323–327 (KPIST), and Arg-349.

It belongs to the chorismate synthase family. Homotetramer. FMNH2 is required as a cofactor.

It carries out the reaction 5-O-(1-carboxyvinyl)-3-phosphoshikimate = chorismate + phosphate. Its pathway is metabolic intermediate biosynthesis; chorismate biosynthesis; chorismate from D-erythrose 4-phosphate and phosphoenolpyruvate: step 7/7. In terms of biological role, catalyzes the anti-1,4-elimination of the C-3 phosphate and the C-6 proR hydrogen from 5-enolpyruvylshikimate-3-phosphate (EPSP) to yield chorismate, which is the branch point compound that serves as the starting substrate for the three terminal pathways of aromatic amino acid biosynthesis. This reaction introduces a second double bond into the aromatic ring system. The sequence is that of Chorismate synthase from Corynebacterium glutamicum (strain ATCC 13032 / DSM 20300 / JCM 1318 / BCRC 11384 / CCUG 27702 / LMG 3730 / NBRC 12168 / NCIMB 10025 / NRRL B-2784 / 534).